We begin with the raw amino-acid sequence, 598 residues long: NADH-quinone oxidoreductase subunit C/D (598 aa).

The NADH dehydrogenase I subunit C stretch occupies residues 1–189; sequence MTDLTTSDSL…DPYVLTKQKE (189 aa). The interval 213 to 598 is NADH dehydrogenase I subunit D; it reads DFMFLNLGPN…IDFVMSDVDR (386 aa).

It in the N-terminal section; belongs to the complex I 30 kDa subunit family. This sequence in the C-terminal section; belongs to the complex I 49 kDa subunit family. NDH-1 is composed of 13 different subunits. Subunits NuoB, CD, E, F, and G constitute the peripheral sector of the complex.

The protein localises to the cell inner membrane. The enzyme catalyses a quinone + NADH + 5 H(+)(in) = a quinol + NAD(+) + 4 H(+)(out). Its function is as follows. NDH-1 shuttles electrons from NADH, via FMN and iron-sulfur (Fe-S) centers, to quinones in the respiratory chain. The immediate electron acceptor for the enzyme in this species is believed to be ubiquinone. Couples the redox reaction to proton translocation (for every two electrons transferred, four hydrogen ions are translocated across the cytoplasmic membrane), and thus conserves the redox energy in a proton gradient. In Yersinia pseudotuberculosis serotype O:1b (strain IP 31758), this protein is NADH-quinone oxidoreductase subunit C/D.